Consider the following 765-residue polypeptide: 5-methyltetrahydropteroyltriglutamate--homocysteine methyltransferase (765 aa).

Residues 18-21 (REWK) and K114 each bind 5-methyltetrahydropteroyltri-L-glutamate. L-homocysteine contacts are provided by residues 437-439 (IGS) and E490. L-methionine is bound by residues 437 to 439 (IGS) and E490. W567 contacts 5-methyltetrahydropteroyltri-L-glutamate. D605 is a binding site for L-homocysteine. D605 provides a ligand contact to L-methionine. E611 is a 5-methyltetrahydropteroyltri-L-glutamate binding site. Zn(2+) contacts are provided by H647, C649, and E671. Catalysis depends on H700, which acts as the Proton donor. Zn(2+) is bound at residue C732.

It belongs to the vitamin-B12 independent methionine synthase family. The cofactor is Zn(2+).

The catalysed reaction is 5-methyltetrahydropteroyltri-L-glutamate + L-homocysteine = tetrahydropteroyltri-L-glutamate + L-methionine. The protein operates within amino-acid biosynthesis; L-methionine biosynthesis via de novo pathway; L-methionine from L-homocysteine (MetE route): step 1/1. Its function is as follows. Catalyzes the transfer of a methyl group from 5-methyltetrahydrofolate to homocysteine resulting in methionine formation. The sequence is that of 5-methyltetrahydropteroyltriglutamate--homocysteine methyltransferase from Listeria innocua serovar 6a (strain ATCC BAA-680 / CLIP 11262).